Consider the following 273-residue polypeptide: MPLSASLLGKNSTYKDSYDATLLFKIPRINNRNELGINSNNLPFYGVDIWNTYELSCLNKNGKPWVGVGTFYIPTDSENIVESKSFKLYLNSFNNFVVESIEELERIILQDLSNVTHAKVTGQIFPINTKIEFGLPSGKNIDDLNIECNNYCPPDNSLIEYEDVLVEEEINSNLLKSNCLVTGQPDWGTIVIKYRGKKLKHDSFLKYLISFRNYNEFAEQCAERIFTDINNSINPDFLSIYIVYTRRGGIDICPYRSLDQNYNLPSNKRLIRQ.

A substrate-binding site is contributed by 81 to 83 (VES). 83–84 (SK) is a binding site for NADPH. Residue Cys-179 is the Thioimide intermediate of the active site. Asp-186 (proton donor) is an active-site residue. 218–219 (AE) is a substrate binding site. An NADPH-binding site is contributed by 247–248 (RG).

The protein belongs to the GTP cyclohydrolase I family. QueF type 2 subfamily. As to quaternary structure, homodimer.

The protein localises to the cytoplasm. It carries out the reaction 7-aminomethyl-7-carbaguanine + 2 NADP(+) = 7-cyano-7-deazaguanine + 2 NADPH + 3 H(+). It participates in tRNA modification; tRNA-queuosine biosynthesis. Functionally, catalyzes the NADPH-dependent reduction of 7-cyano-7-deazaguanine (preQ0) to 7-aminomethyl-7-deazaguanine (preQ1). This is NADPH-dependent 7-cyano-7-deazaguanine reductase from Rickettsia canadensis (strain McKiel).